The sequence spans 711 residues: Ent-copalyl diphosphate synthase 1 (711 aa).

Lys145 lines the substrate pocket. Positions 277 and 279 each coordinate Mg(2+). The short motif at 277–280 is the DXDD motif element; sequence DIDD. A substrate-binding site is contributed by Lys364.

This sequence belongs to the terpene synthase family. Tpsc subfamily. Requires Mg(2+) as cofactor.

It carries out the reaction (2E,6E,10E)-geranylgeranyl diphosphate = ent-copalyl diphosphate. The protein operates within secondary metabolite biosynthesis; terpenoid biosynthesis. Functionally, involved in the biosynthesis of ent-kaurene diterpenoids natural products such as oridonin, miltiradiene, eriocalyxin B and nezukol, known to exhibit antitumor, anti-inflammatory and antibacterial activities. Catalyzes the conversion of (2E,6E,10E)-geranylgeranyl diphosphate (GGPP) to ent-copalyl diphosphate (ent-CPP). In Isodon japonicus (Scutellaria japonica), this protein is Ent-copalyl diphosphate synthase 1.